The chain runs to 519 residues: Cytochrome P450 monooxygenase easM (519 aa).

The chain crosses the membrane as a helical span at residues V16–S33. N50 and N353 each carry an N-linked (GlcNAc...) asparagine glycan. Position 458 (C458) interacts with heme.

This sequence belongs to the cytochrome P450 family. It depends on heme as a cofactor.

The protein resides in the membrane. The protein operates within alkaloid biosynthesis; ergot alkaloid biosynthesis. Cytochrome P450 monooxygenase; part of the gene cluster that mediates the biosynthesis of fumiclavanine C, a fungal ergot alkaloid. DmaW catalyzes the first step of ergot alkaloid biosynthesis by condensing dimethylallyl diphosphate (DMAP) and tryptophan to form 4-dimethylallyl-L-tryptophan. The second step is catalyzed by the methyltransferase easF that methylates 4-dimethylallyl-L-tryptophan in the presence of S-adenosyl-L-methionine, resulting in the formation of 4-dimethylallyl-L-abrine. The catalase easC and the FAD-dependent oxidoreductase easE then transform 4-dimethylallyl-L-abrine to chanoclavine-I which is further oxidized by EasD in the presence of NAD(+), resulting in the formation of chanoclavine-I aldehyde. EasA reduces chanoclavine-I aldehyde to dihydrochanoclavine-I aldehyde that spontaneously dehydrates to form 6,8-dimethyl-6,7-didehydroergoline. EasG then catalyzes the reduction of 6,8-dimethyl-6,7-didehydroergoline to form festuclavine. Hydrolysis of festuclavine by easM then leads to the formation of fumigaclavine B which is in turn acetylated by easN to fumigaclavine A. Finally, easL catalyzes the conversion of fumigaclavine A into fumigaclavine C by attaching a dimethylallyl moiety to C-2 of the indole nucleus. The polypeptide is Cytochrome P450 monooxygenase easM (Aspergillus fumigatus (strain ATCC MYA-4609 / CBS 101355 / FGSC A1100 / Af293) (Neosartorya fumigata)).